The chain runs to 962 residues: MTTETLTQLEQHELFIRRHIGPDSAQQQEMLNFVGAESLEDLTQQIVPESIRLNRDLAVGSACGEAEGMAYIREIADKNKVFKSYIGMGYYGTEVPSVIQRNVLENPGWYTAYTPYQPEIAQGRLEAILNFQQVSMDLTGLDLASASLLDEATAAAEAMALAKRVSKAKKANIFFVADDVFPQTLDVVKTRAECFGFEIVVGPASEAVNYELFGALFQYTNRFGEITDFTELFTELKAKKAVVSVAADIMSLVMLKSPGSMGADVVFGSAQRFGVPMGLGGPHAAFFVTRDAHKRSLPGRIIGVSQDTRGNRALRMAMQTREQHIRREKANSNICTAQVLLANMASFYAVYHGPQGLKIIAERIHRLTDILASGLTAKGVELVNGTWFDTLSLKATDSEAITARAVAAGINLRIDSDGVLGVSLAETTLREDIAELFDVILGEGHGLDVAALDAEIIKAGSSSIPAQLVRTDAILTHPTFNSYHSETEMMRYIKRLENKDLALNHSMISLGSCTMKLNAATEMMPISWPEFGNMHPFCPLDQSEGYTDLIEELSTWLVDITGYDAMCMQANSGASGEYAGLLAIRNYHISRGDAHRNVCLIPQSAHGTNPASAQMAGMKIVVTACDKAGNVDMEDLKAKAAEVAENLSCIMITYPSTHGVYEETVSEICEVIHQHGGQVYLDGANMNAQVGLTTPGSIGADVSHLNLHKTFAIPHGGGGPGMGPIGVKAHLAPFVAGHVVVKHGRESDNNGAVSAAPYGSASILPITWMYIKLLGHQGLRQSTQVALLNANYVMKKLSEHYPVLYTGRNERVAHECIIDLRPLKESSGVTEMDIAKRLNDYGFHAPTMSFPVAGTLMIEPTESESKVELDRFIEAMISIRGEASRVESGEWPADNNPLHNAPHTLADIMDPEFDSRPYSREVAVFPTAAVKLNKFWPTVNRIDDVFGDRNLFCACVPMSEYE.

Lysine 709 bears the N6-(pyridoxal phosphate)lysine mark.

The protein belongs to the GcvP family. In terms of assembly, the glycine cleavage system is composed of four proteins: P, T, L and H. Pyridoxal 5'-phosphate serves as cofactor.

It catalyses the reaction N(6)-[(R)-lipoyl]-L-lysyl-[glycine-cleavage complex H protein] + glycine + H(+) = N(6)-[(R)-S(8)-aminomethyldihydrolipoyl]-L-lysyl-[glycine-cleavage complex H protein] + CO2. Its function is as follows. The glycine cleavage system catalyzes the degradation of glycine. The P protein binds the alpha-amino group of glycine through its pyridoxal phosphate cofactor; CO(2) is released and the remaining methylamine moiety is then transferred to the lipoamide cofactor of the H protein. This Shewanella sediminis (strain HAW-EB3) protein is Glycine dehydrogenase (decarboxylating).